Reading from the N-terminus, the 870-residue chain is DNA polymerase kappa (870 aa).

The UmuC domain maps to 103-358 (IVHIDMDAFY…LPIRKVSGIG (256 aa)). Mg(2+)-binding residues include Asp107, Asp198, and Glu199. 2 UBZ4-type zinc fingers span residues 621-651 (ILTCPVCFRAQGCISLEALNKHVDECLDGPS) and 776-806 (ALVCPVCNVEQKTSDLTLFNVHVDVCLNKSF). Zn(2+) is bound by residues Cys624, Cys627, His642, Cys646, Cys779, Cys782, His797, and Cys801. A disordered region spans residues 816-858 (NPVNQPKESSRSTGSSSGVQKAVTRTKRPGLMTKYSTSKKIKP).

This sequence belongs to the DNA polymerase type-Y family. In terms of assembly, interacts with REV1. Interacts with PCNA. Requires Mg(2+) as cofactor. Mn(2+) serves as cofactor. Detected at low levels in testis, spleen, prostate and ovary. Detected at very low levels in kidney, colon, brain, heart, liver, lung, placenta, pancreas and peripheral blood leukocytes.

Its subcellular location is the nucleus. It carries out the reaction DNA(n) + a 2'-deoxyribonucleoside 5'-triphosphate = DNA(n+1) + diphosphate. Functionally, DNA polymerase specifically involved in DNA repair. Plays an important role in translesion synthesis, where the normal high-fidelity DNA polymerases cannot proceed and DNA synthesis stalls. Depending on the context, it inserts the correct base, but causes frequent base transitions, transversions and frameshifts. Lacks 3'-5' proofreading exonuclease activity. Forms a Schiff base with 5'-deoxyribose phosphate at abasic sites, but does not have lyase activity. The polypeptide is DNA polymerase kappa (POLK) (Homo sapiens (Human)).